Reading from the N-terminus, the 265-residue chain is Putative 2-aminoethylphosphonate transport system permease protein PhnV (265 aa).

A run of 6 helical transmembrane segments spans residues 13 to 33, 69 to 89, 104 to 124, 131 to 151, 185 to 205, and 233 to 253; these read GVVASVLFIVFFFLPLAVILM, LTIGFCASLFALLCGVWAALA, VFYLPSAIPSVSVGLGILVAF, MNGTLWIVLTAHFVLISAFTF, LPLLMPWMMSALALSLSLSMG, and NIADGAALTIVLVAITLLLMM. The ABC transmembrane type-1 domain maps to 65-253; that stretch reads LLASLTIGFC…LVAITLLLMM (189 aa).

This sequence belongs to the binding-protein-dependent transport system permease family.

It localises to the cell inner membrane. Probably part of the PhnSTUV complex (TC 3.A.1.11.5) involved in 2-aminoethylphosphonate import. Probably responsible for the translocation of the substrate across the membrane. The protein is Putative 2-aminoethylphosphonate transport system permease protein PhnV (phnV) of Salmonella choleraesuis (strain SC-B67).